The chain runs to 303 residues: Mycothiol acetyltransferase (303 aa).

Asp33 provides a ligand contact to 1D-myo-inositol 2-(L-cysteinylamino)-2-deoxy-alpha-D-glucopyranoside. Acetyl-CoA-binding positions include 78-80 (VVV) and 86-91 (RRGTGS). Residues 150-303 (VRFATYSGPH…AYAAVAPTDV (154 aa)) enclose the N-acetyltransferase domain. 3 residues coordinate 1D-myo-inositol 2-(L-cysteinylamino)-2-deoxy-alpha-D-glucopyranoside: Glu177, Lys218, and Glu226. 230 to 232 (VGV) lines the acetyl-CoA pocket. Residue Tyr269 participates in 1D-myo-inositol 2-(L-cysteinylamino)-2-deoxy-alpha-D-glucopyranoside binding. 274–279 (NTAAVK) is a binding site for acetyl-CoA.

This sequence belongs to the acetyltransferase family. MshD subfamily. In terms of assembly, monomer.

It carries out the reaction 1D-myo-inositol 2-(L-cysteinylamino)-2-deoxy-alpha-D-glucopyranoside + acetyl-CoA = mycothiol + CoA + H(+). In terms of biological role, catalyzes the transfer of acetyl from acetyl-CoA to desacetylmycothiol (Cys-GlcN-Ins) to form mycothiol. In Mycolicibacterium gilvum (strain PYR-GCK) (Mycobacterium gilvum (strain PYR-GCK)), this protein is Mycothiol acetyltransferase.